Here is a 148-residue protein sequence, read N- to C-terminus: Protein SprT-like (148 aa).

The SprT-like domain occupies 6 to 147 (LQQLVATISM…CGRCQGPIKL (142 aa)). A Zn(2+)-binding site is contributed by His-67. The active site involves Glu-68. His-71 contributes to the Zn(2+) binding site.

It belongs to the SprT family. It depends on Zn(2+) as a cofactor.

It localises to the cytoplasm. The sequence is that of Protein SprT-like from Lactiplantibacillus plantarum (strain ATCC BAA-793 / NCIMB 8826 / WCFS1) (Lactobacillus plantarum).